A 239-amino-acid polypeptide reads, in one-letter code: Tryptophan synthase alpha chain (239 aa).

Active-site proton acceptor residues include glutamate 34 and aspartate 45.

It belongs to the TrpA family. As to quaternary structure, tetramer of two alpha and two beta chains.

It catalyses the reaction (1S,2R)-1-C-(indol-3-yl)glycerol 3-phosphate + L-serine = D-glyceraldehyde 3-phosphate + L-tryptophan + H2O. The protein operates within amino-acid biosynthesis; L-tryptophan biosynthesis; L-tryptophan from chorismate: step 5/5. In terms of biological role, the alpha subunit is responsible for the aldol cleavage of indoleglycerol phosphate to indole and glyceraldehyde 3-phosphate. The chain is Tryptophan synthase alpha chain from Thermotoga petrophila (strain ATCC BAA-488 / DSM 13995 / JCM 10881 / RKU-1).